A 28-amino-acid chain; its full sequence is Phospholipase A2 pseudexin C chain (28 aa).

Tyrosine 28 contacts Ca(2+).

The protein belongs to the phospholipase A2 family. Group I subfamily. Ca(2+) is required as a cofactor. Expressed by the venom gland.

The protein resides in the secreted. The enzyme catalyses a 1,2-diacyl-sn-glycero-3-phosphocholine + H2O = a 1-acyl-sn-glycero-3-phosphocholine + a fatty acid + H(+). Functionally, PLA2 catalyzes the calcium-dependent hydrolysis of the 2-acyl groups in 3-sn-phosphoglycerides. The protein is Phospholipase A2 pseudexin C chain of Pseudechis porphyriacus (Red-bellied black snake).